The following is a 1829-amino-acid chain: Iron-regulated protein FrpC (1829 aa).

Hemolysin-type calcium-binding repeat units follow at residues 869-886 (FGHN…NDTL), 887-904 (IGGA…SDTY), 1015-1032 (NGGL…DDLL), 1033-1050 (NGDA…NDTL), 1051-1068 (NGGE…NDAL), 1069-1086 (NGGE…NDTL), 1087-1104 (IGGA…SDTY), 1215-1232 (NGGL…DDLL), 1233-1250 (NGDA…NDTL), 1251-1268 (DGGE…NDAL), 1269-1286 (NGGE…NDTL), 1287-1304 (IGGA…SDTY), 1415-1432 (NGGL…DDLL), 1433-1450 (NGDA…NDTL), 1451-1468 (DGGE…NDAL), 1469-1486 (NGGE…NDTL), 1487-1504 (IGGA…SDTY), 1615-1632 (NGGL…DDLL), 1633-1650 (NGDA…NDTL), 1651-1668 (NGGE…NDVL), 1669-1686 (NGGE…NDTL), and 1687-1704 (IGGA…SDTY).

Belongs to the RTX prokaryotic toxin (TC 1.C.11) family.

Its subcellular location is the cell outer membrane. The protein resides in the secreted. May participate in the pathogenesis of meningococcal disease. The protein is Iron-regulated protein FrpC (frpC) of Neisseria meningitidis serogroup C.